We begin with the raw amino-acid sequence, 251 residues long: Keratin-associated protein 10-10 (251 aa).

Repeat copies occupy residues 26 to 30, 31 to 35, 52 to 56, 84 to 88, 94 to 98, 99 to 103, 104 to 109, 126 to 130, 136 to 140, 146 to 150, 168 to 172, 178 to 182, 183 to 187, 202 to 206, and 220 to 224. Residues 26–224 form a 15 X 5 AA repeats of C-C-X(3) region; the sequence is CCEPCCCAPA…SCQPSCCRTA (199 aa).

The protein belongs to the KRTAP type 10 family. In terms of assembly, interacts with hair keratins. Restricted to a narrow region of the hair fiber cuticle, lying approximately 20 cell layers above the apex of the dermal papilla of the hair root; not detected in any other tissues.

Its function is as follows. In the hair cortex, hair keratin intermediate filaments are embedded in an interfilamentous matrix, consisting of hair keratin-associated proteins (KRTAP), which are essential for the formation of a rigid and resistant hair shaft through their extensive disulfide bond cross-linking with abundant cysteine residues of hair keratins. The matrix proteins include the high-sulfur and high-glycine-tyrosine keratins. The protein is Keratin-associated protein 10-10 (KRTAP10-10) of Homo sapiens (Human).